The primary structure comprises 604 residues: NADP-dependent malic enzyme, mitochondrial (604 aa).

Residues 29–50 (APAQGCHSKPGPARPVPLKKRG) are disordered. Catalysis depends on Tyr-137, which acts as the Proton donor. NAD(+) is bound at residue Arg-190. Residue Lys-208 is the Proton acceptor of the active site. Residues Glu-280, Asp-281, and Asp-304 each contribute to the a divalent metal cation site. Residue Asp-304 coordinates NAD(+). Ser-371 carries the post-translational modification Phosphoserine. Asn-443 contributes to the NAD(+) binding site.

It belongs to the malic enzymes family. Requires Mg(2+) as cofactor. Mn(2+) is required as a cofactor. As to expression, expressed predominantly in organs with a low-division rate.

The protein resides in the mitochondrion matrix. The catalysed reaction is (S)-malate + NADP(+) = pyruvate + CO2 + NADPH. It carries out the reaction oxaloacetate + H(+) = pyruvate + CO2. Functionally, catalyzes the oxidative decarboxylation of (S)-malate to pyruvate using NADP(+) as a cofactor. Can also reverse the decarboxylation reaction, but only with significantly lower efficiency. This chain is NADP-dependent malic enzyme, mitochondrial, found in Homo sapiens (Human).